The sequence spans 296 residues: Glycine--tRNA ligase alpha subunit (296 aa).

The protein belongs to the class-II aminoacyl-tRNA synthetase family. In terms of assembly, tetramer of two alpha and two beta subunits.

It is found in the cytoplasm. The enzyme catalyses tRNA(Gly) + glycine + ATP = glycyl-tRNA(Gly) + AMP + diphosphate. This chain is Glycine--tRNA ligase alpha subunit, found in Desulfitobacterium hafniense (strain Y51).